A 201-amino-acid polypeptide reads, in one-letter code: Recombination protein RecR (201 aa).

A C4-type zinc finger spans residues 59 to 74 (CSRCQNFCEAELCSIC). The Toprim domain occupies 82–177 (RVLCVVESPT…PVSRIAHGIP (96 aa)).

This sequence belongs to the RecR family.

Its function is as follows. May play a role in DNA repair. It seems to be involved in an RecBC-independent recombinational process of DNA repair. It may act with RecF and RecO. This Hahella chejuensis (strain KCTC 2396) protein is Recombination protein RecR.